A 177-amino-acid polypeptide reads, in one-letter code: Endoribonuclease YbeY (177 aa).

Residues His118, His122, and His128 each coordinate Zn(2+).

The protein belongs to the endoribonuclease YbeY family. The cofactor is Zn(2+).

It is found in the cytoplasm. In terms of biological role, single strand-specific metallo-endoribonuclease involved in late-stage 70S ribosome quality control and in maturation of the 3' terminus of the 16S rRNA. The protein is Endoribonuclease YbeY of Mycobacterium bovis (strain ATCC BAA-935 / AF2122/97).